We begin with the raw amino-acid sequence, 313 residues long: Mitochondrial uncoupling protein 4 (313 aa).

Solcar repeat units lie at residues 4-115 (KSFV…LKNK), 124-215 (LNLS…FKEG), and 224-309 (DGLG…VRKL). 6 helical membrane-spanning segments follow: residues 6–26 (FVEGGIASVIAGCSTHPLDLI), 84–104 (AAALFSGVSATLLRQTLYSTT), 130–150 (IGAGLVAGGIGAAVGNPADVA), 189–209 (RGSALTINRAMIVTAAQLASY), 230–250 (VVASFAAGFVASVASNPVDVI), and 282–302 (YKGFVPTVCRQGPFTVVLFVT).

Belongs to the mitochondrial carrier (TC 2.A.29) family. As to expression, expressed in roots, leaves, stems and flowers.

Its subcellular location is the mitochondrion inner membrane. In terms of biological role, PUMPS are mitochondrial transporter proteins that create proton leaks across the inner mitochondrial membrane, thus uncoupling oxidative phosphorylation. This leads to a decrease in the efficiency of oxidative phosphorylation and an increase in heat production. May be involved in protecting plant cells against oxidative stress damage. Recombinant PUMP4, reconstituted into liposomes, transports a wide range of dicarboxylic acids including malate, oxaloacetate and succinate as well as phosphate, sulfate and thiosulfate. However, it is unknown if these transports are of any biological significance in vivo. The protein is Mitochondrial uncoupling protein 4 (PUMP4) of Arabidopsis thaliana (Mouse-ear cress).